The chain runs to 413 residues: Histidine--tRNA ligase (413 aa).

Belongs to the class-II aminoacyl-tRNA synthetase family. In terms of assembly, homodimer.

Its subcellular location is the cytoplasm. It catalyses the reaction tRNA(His) + L-histidine + ATP = L-histidyl-tRNA(His) + AMP + diphosphate + H(+). The sequence is that of Histidine--tRNA ligase from Neorickettsia sennetsu (strain ATCC VR-367 / Miyayama) (Ehrlichia sennetsu).